Reading from the N-terminus, the 276-residue chain is Putative hydro-lyase Xaut_1503 (276 aa).

This sequence belongs to the D-glutamate cyclase family.

The polypeptide is Putative hydro-lyase Xaut_1503 (Xanthobacter autotrophicus (strain ATCC BAA-1158 / Py2)).